A 674-amino-acid chain; its full sequence is Primary amine oxidase (674 aa).

A signal peptide spans 1–25; the sequence is MASTTTMRLALFSVLTLLSFHAVVS. Residue Asn-156 is glycosylated (N-linked (GlcNAc...) asparagine). The cysteines at positions 162 and 183 are disulfide-linked. Residues 226–236 are compositionally biased toward polar residues; sequence ENTEYQVSKQS. The segment at 226–251 is disordered; the sequence is ENTEYQVSKQSPPFGPKQHSLTSHQP. 323 to 334 lines the substrate pocket; sequence FFDSGEFGFGLS. The active-site Proton acceptor is the Asp-325. An intrachain disulfide couples Cys-344 to Cys-370. A glycan (N-linked (GlcNAc...) asparagine) is linked at Asn-389. 409 to 414 contributes to the substrate binding site; the sequence is VGNYDN. The active-site Schiff-base intermediate with substrate; via topaquinone is the Tyr-412. A 2',4',5'-topaquinone modification is found at Tyr-412. Residues His-467 and His-469 each contribute to the Cu cation site. Residues Asp-476, Phe-477, Asp-478, Asp-617, and Ile-618 each coordinate Mn(2+). Cu cation is bound at residue His-628.

Belongs to the copper/topaquinone oxidase family. Homodimer. Requires Cu cation as cofactor. It depends on Mn(2+) as a cofactor. L-topaquinone is required as a cofactor. Topaquinone (TPQ) is generated by copper-dependent autoxidation of a specific tyrosyl residue.

It catalyses the reaction a primary methyl amine + O2 + H2O = an aldehyde + H2O2 + NH4(+). The sequence is that of Primary amine oxidase from Pisum sativum (Garden pea).